The following is a 314-amino-acid chain: MKLKKPKFWDHKKPSFFSYLLLPFSIILGLITKIKSKPKFSNSKIKTICVGNIYIGGTGKTSLAIKIKEILDKNNIRACFIKKFYPNQTDEQKLLSKNGVLFSNLKRITALNEAISEGFEVAIFDDGLQDSTIKYDLEIVCFNNLNWIGNGLTLPSGPLRENINNLKSYENVFLNGNEESLIAIKEQIKRINPNININSGKYIPLNIDEFDKDQNYLVFSGIGNHKTFVEMLKNNKLKIVSDLEYPDHYQYSKKDFDEIIINAKKFNAHIITTEKDYLRLENLNKNEIFYVKSSLDISDEKNLTNKLIKLNEKN.

54 to 61 (YIGGTGKT) provides a ligand contact to ATP.

It belongs to the LpxK family.

It carries out the reaction a lipid A disaccharide + ATP = a lipid IVA + ADP + H(+). It participates in glycolipid biosynthesis; lipid IV(A) biosynthesis; lipid IV(A) from (3R)-3-hydroxytetradecanoyl-[acyl-carrier-protein] and UDP-N-acetyl-alpha-D-glucosamine: step 6/6. Transfers the gamma-phosphate of ATP to the 4'-position of a tetraacyldisaccharide 1-phosphate intermediate (termed DS-1-P) to form tetraacyldisaccharide 1,4'-bis-phosphate (lipid IVA). In Pelagibacter ubique (strain HTCC1062), this protein is Tetraacyldisaccharide 4'-kinase.